The chain runs to 223 residues: Uracil-DNA glycosylase (223 aa).

The active-site Proton acceptor is the Asp-61.

This sequence belongs to the uracil-DNA glycosylase (UDG) superfamily. UNG family.

It is found in the cytoplasm. The enzyme catalyses Hydrolyzes single-stranded DNA or mismatched double-stranded DNA and polynucleotides, releasing free uracil.. Functionally, excises uracil residues from the DNA which can arise as a result of misincorporation of dUMP residues by DNA polymerase or due to deamination of cytosine. The chain is Uracil-DNA glycosylase from Haemophilus ducreyi (strain 35000HP / ATCC 700724).